A 259-amino-acid polypeptide reads, in one-letter code: UPF0246 protein NGK_0633 (259 aa).

Belongs to the UPF0246 family.

The sequence is that of UPF0246 protein NGK_0633 from Neisseria gonorrhoeae (strain NCCP11945).